A 467-amino-acid polypeptide reads, in one-letter code: Putative vacuolar protein sorting-associated protein TDA6 (467 aa).

Residues 8–28 (ILLWFLIVDLSVIRALVLPPL) traverse the membrane as a helical segment. 3 N-linked (GlcNAc...) asparagine glycosylation sites follow: N61, N124, and N141.

This sequence belongs to the VPS62 family.

Its subcellular location is the membrane. Its function is as follows. Involved in vacuolar protein sorting. The sequence is that of Putative vacuolar protein sorting-associated protein TDA6 (TDA6) from Saccharomyces cerevisiae (strain ATCC 204508 / S288c) (Baker's yeast).